A 734-amino-acid polypeptide reads, in one-letter code: Sulfate transporter (734 aa).

Over residues 1–18 (MSLKNEDQNDLSPKDSVK) the composition is skewed to basic and acidic residues. The segment at 1–38 (MSLKNEDQNDLSPKDSVKGNDQYRAPSGIHLEPEEESR) is disordered. Residues Ser12 and Ser16 each carry the phosphoserine modification. Helical transmembrane passes span 113–133 (VMSGLIVGILLVPQSIAYSLL) and 138–158 (PIYGLYTSFFASLIYFILGTS). Asn194 carries N-linked (GlcNAc...) asparagine glycosylation. Transmembrane regions (helical) follow at residues 214–234 (IIVGSTVTFVAGVYQVAMGFF), 237–257 (GFVSVYLSDALLGGFVTGASF), 379–399 (VDAIAIAIIGFAITVSLSEMF), 415–435 (AIGFCNIIPSFFHCFTTSAAL), 453–473 (VMTALVLLLVLLVIAPLFFSL), and 519–539 (LISTEIGLLTGVCFSMFCVIL). Residues 563 to 714 (AYKNLQAKSG…YSIYEAMTFA (152 aa)) enclose the STAS domain.

This sequence belongs to the SLC26A/SulP transporter (TC 2.A.53) family. In terms of processing, N-glycosylated.

Its subcellular location is the cell membrane. It localises to the apical cell membrane. The catalysed reaction is oxalate(in) + sulfate(out) = oxalate(out) + sulfate(in). The enzyme catalyses sulfate(out) + 2 chloride(in) = sulfate(in) + 2 chloride(out). It carries out the reaction oxalate(out) + 2 chloride(in) = oxalate(in) + 2 chloride(out). It catalyses the reaction bromide(in) + chloride(out) = bromide(out) + chloride(in). The catalysed reaction is nitrate(in) + chloride(out) = nitrate(out) + chloride(in). The enzyme catalyses iodide(in) + chloride(out) = iodide(out) + chloride(in). Functionally, sulfate transporter which mediates sulfate uptake into chondrocytes in order to maintain adequate sulfation of proteoglycans which is needed for cartilage development. Mediates electroneutral anion exchange of sulfate ions for oxalate ions, sulfate and oxalate ions for chloride and/or hydroxyl ions and chloride ions for bromide, iodide and nitrate ions. The coupling of sulfate transport to both hydroxyl and chloride ions likely serves to ensure transport at both acidic pH when most sulfate uptake is mediated by sulfate-hydroxide exchange and alkaline pH when most sulfate uptake is mediated by sulfate-chloride exchange. Essential for chondrocyte proliferation, differentiation and cell size expansion. This chain is Sulfate transporter (SLC26A2), found in Bos taurus (Bovine).